The chain runs to 286 residues: Short-chain dehydrogenase fogD (286 aa).

Residues valine 8, threonine 34, aspartate 55, tyrosine 147, lysine 151, valine 180, and threonine 182 each contribute to the NADP(+) site. Tyrosine 147 (proton acceptor) is an active-site residue. Catalysis depends on lysine 151, which acts as the Lowers pKa of active site Tyr.

This sequence belongs to the short-chain dehydrogenases/reductases (SDR) family.

The protein operates within secondary metabolite biosynthesis. Functionally, short-chain dehydrogenase; part of the gene cluster that mediates the biosynthesis of flavoglaucin and congeners (including aspergin, dihydroauroglaucin and auroglaucin), prenylated salicylaldehyde derivatives carrying a saturated or an unsaturated C-7 side chain. The PKS fogA releases the carboxylic acid (8E,10E,12E)-3,5,7-trihydroxytetradeca-8,10,12-trienoic acid as its product, as well as derivatives with one and two double bonds. FogA is indeed able to reduce the initial triketide, thus being at least partially responsible for the differently saturated heptyl side chains of flavoglaucin congeners. The oxidoreductases fogB, fogC and fogD modify the nascent polyketide in fogA-bound form and, together, fogA, fogB, fogC and fogD are necessary for the formation of the aromatic core and the cyclized PKS products are released as salicyl alcohols. In particular, fogB is responsible for oxidation of a hydroxyl group or reduction of remaining double bond(s) at the C-7 residue whereas fogD is probably involved in the reductive release of the modified PKS products. The cytochrome P450 monooxygenase fogE is then responsible for the hydroxylation at C-3 of the benzene ring. The fogE products are substrates of the prenyltransferase fogH and the prenylated benzyl alcohols are subsequently oxidized by the fogF to produce the final aryl aldehydes flavoglaucin and congeners. The short-chain dehydrogenase fogG does not seem to be involved in the biosynthesis of the prenylated salicylaldehyde derivatives. The chain is Short-chain dehydrogenase fogD from Aspergillus ruber (strain CBS 135680).